The chain runs to 665 residues: Transketolase (665 aa).

His-26 is a binding site for substrate. Thiamine diphosphate contacts are provided by residues His-66 and 114 to 116; that span reads GPL. Residue Asp-155 participates in Mg(2+) binding. Thiamine diphosphate contacts are provided by Gly-156 and Asn-185. Mg(2+) contacts are provided by Asn-185 and Ile-187. Substrate contacts are provided by His-261, Arg-358, and Ser-385. Residue His-261 participates in thiamine diphosphate binding. Glu-411 (proton donor) is an active-site residue. Residue Phe-437 coordinates thiamine diphosphate. The substrate site is built by His-461, Asp-469, and Arg-520.

Belongs to the transketolase family. Homodimer. Requires Mg(2+) as cofactor. Ca(2+) is required as a cofactor. It depends on Mn(2+) as a cofactor. The cofactor is Co(2+). Thiamine diphosphate serves as cofactor.

The enzyme catalyses D-sedoheptulose 7-phosphate + D-glyceraldehyde 3-phosphate = aldehydo-D-ribose 5-phosphate + D-xylulose 5-phosphate. In terms of biological role, catalyzes the transfer of a two-carbon ketol group from a ketose donor to an aldose acceptor, via a covalent intermediate with the cofactor thiamine pyrophosphate. This Buchnera aphidicola subsp. Schizaphis graminum (strain Sg) protein is Transketolase (tkt).